We begin with the raw amino-acid sequence, 577 residues long: Arginine--tRNA ligase (577 aa).

The 'HIGH' region motif lies at 122 to 132; that stretch reads PNVAKEMHVGH.

It belongs to the class-I aminoacyl-tRNA synthetase family. In terms of assembly, monomer.

It is found in the cytoplasm. It carries out the reaction tRNA(Arg) + L-arginine + ATP = L-arginyl-tRNA(Arg) + AMP + diphosphate. This Salmonella arizonae (strain ATCC BAA-731 / CDC346-86 / RSK2980) protein is Arginine--tRNA ligase.